Consider the following 154-residue polypeptide: Small ribosomal subunit protein uS13m (154 aa).

The transit peptide at 1 to 30 directs the protein to the mitochondrion; it reads MLGLRRSATTLFDISQSLLRNVTFHGLRVQ. The disordered stretch occupies residues 121–154; that stretch reads RHGLPCRGQRTSTNARTKKGKAVAIAGKKKAPRK. The segment covering 136–154 has biased composition (basic residues); sequence RTKKGKAVAIAGKKKAPRK.

It belongs to the universal ribosomal protein uS13 family. Part of the small ribosomal subunit.

The protein localises to the mitochondrion. In terms of biological role, located at the top of the head of the small subunit, it contacts several helices of the 18S rRNA. The chain is Small ribosomal subunit protein uS13m (RPS13) from Arabidopsis thaliana (Mouse-ear cress).